A 162-amino-acid polypeptide reads, in one-letter code: Putative 4-hydroxy-4-methyl-2-oxoglutarate aldolase (162 aa).

Substrate-binding positions include 75-78 and Arg97; that span reads GDML. Position 98 (Asp98) interacts with a divalent metal cation.

Belongs to the class II aldolase/RraA-like family. In terms of assembly, homotrimer. Requires a divalent metal cation as cofactor.

It catalyses the reaction 4-hydroxy-4-methyl-2-oxoglutarate = 2 pyruvate. The catalysed reaction is oxaloacetate + H(+) = pyruvate + CO2. Its function is as follows. Catalyzes the aldol cleavage of 4-hydroxy-4-methyl-2-oxoglutarate (HMG) into 2 molecules of pyruvate. Also contains a secondary oxaloacetate (OAA) decarboxylase activity due to the common pyruvate enolate transition state formed following C-C bond cleavage in the retro-aldol and decarboxylation reactions. In Pseudomonas paraeruginosa (strain DSM 24068 / PA7) (Pseudomonas aeruginosa (strain PA7)), this protein is Putative 4-hydroxy-4-methyl-2-oxoglutarate aldolase.